Reading from the N-terminus, the 501-residue chain is Mitochondrial inner membrane i-AAA protease supercomplex subunit MGR3 (501 aa).

Residues 1–77 (MLLQGMRLSQ…PKPNLKKKNR (77 aa)) lie on the Mitochondrial matrix side of the membrane. The tract at residues 39 to 72 (RPPASNFNTQESAPIPESPANSPTRPQMAPKPNL) is disordered. Residues 78–95 (SLMYSIIGVSIVGLYFWF) traverse the membrane as a helical segment. Over 96 to 501 (KSNSRKQKLP…LKAAKKEGLN (406 aa)) the chain is Mitochondrial intermembrane. TPR repeat units lie at residues 109–144 (QKVW…CDRS), 154–187 (TRIE…FFEA), 386–420 (GTYI…AKRN), and 440–473 (ALST…AKET).

This sequence belongs to the MGR3 family. In terms of assembly, component of the mitochondrial inner membrane i-AAA protease supercomplex composed of MGR1, MGR3 and YME1. With MGR1, forms a subcomplex that binds to YME1 and to substrates to facilitate proteolysis.

It localises to the mitochondrion inner membrane. Its function is as follows. Component of the mitochondrial inner membrane i-AAA protease supercomplex, which degrades misfolded mitochondrial proteins. Together with MGR1, functions in an adapter complex that targets substrates to the i-AAA protease for degradation. Required for growth of cells lacking the mitochondrial genome. The sequence is that of Mitochondrial inner membrane i-AAA protease supercomplex subunit MGR3 (MGR3) from Saccharomyces cerevisiae (strain ATCC 204508 / S288c) (Baker's yeast).